The following is an 863-amino-acid chain: DNA mismatch repair protein MutS (863 aa).

Gly-617–Ser-624 is a binding site for ATP.

Belongs to the DNA mismatch repair MutS family.

Functionally, this protein is involved in the repair of mismatches in DNA. It is possible that it carries out the mismatch recognition step. This protein has a weak ATPase activity. The sequence is that of DNA mismatch repair protein MutS from Pseudomonas fluorescens (strain SBW25).